The chain runs to 309 residues: Dihydroorotate dehydrogenase B (NAD(+)), catalytic subunit (309 aa).

Residues Ser-21 and Lys-45–Ala-46 contribute to the FMN site. Residues Lys-45 and Asn-69–Leu-73 contribute to the substrate site. Positions 99 and 127 each coordinate FMN. Substrate is bound at residue Asn-127. Residue Cys-130 is the Nucleophile of the active site. Residues Lys-165 and Ile-191 each contribute to the FMN site. Asn-192–Thr-193 is a binding site for substrate. Residues Gly-217, Gly-243 to Gly-244, and Gly-265 to Thr-266 each bind FMN.

It belongs to the dihydroorotate dehydrogenase family. Type 1 subfamily. In terms of assembly, heterotetramer of 2 PyrK and 2 PyrD type B subunits. It depends on FMN as a cofactor.

It is found in the cytoplasm. It catalyses the reaction (S)-dihydroorotate + NAD(+) = orotate + NADH + H(+). The protein operates within pyrimidine metabolism; UMP biosynthesis via de novo pathway; orotate from (S)-dihydroorotate (NAD(+) route): step 1/1. In terms of biological role, catalyzes the conversion of dihydroorotate to orotate with NAD(+) as electron acceptor. This Bacillus cytotoxicus (strain DSM 22905 / CIP 110041 / 391-98 / NVH 391-98) protein is Dihydroorotate dehydrogenase B (NAD(+)), catalytic subunit (pyrD).